We begin with the raw amino-acid sequence, 127 residues long: Glycine cleavage system H protein (127 aa).

Residues 24 to 106 (VVTVGVTFHA…YGAGWFFKLK (83 aa)) enclose the Lipoyl-binding domain. At K65 the chain carries N6-lipoyllysine.

Belongs to the GcvH family. As to quaternary structure, the glycine cleavage system is composed of four proteins: P, T, L and H. The cofactor is (R)-lipoate.

In terms of biological role, the glycine cleavage system catalyzes the degradation of glycine. The H protein shuttles the methylamine group of glycine from the P protein to the T protein. This Laribacter hongkongensis (strain HLHK9) protein is Glycine cleavage system H protein.